A 153-amino-acid polypeptide reads, in one-letter code: Bifunctional protein GAL10 (153 aa).

A galactowaldenase region spans residues 1 to 153 (MSDDIFLVTG…IPIPEHCPME (153 aa)).

This sequence in the N-terminal section; belongs to the NAD(P)-dependent epimerase/dehydratase family. It in the C-terminal section; belongs to the aldose epimerase family. Requires NAD(+) as cofactor.

The catalysed reaction is UDP-alpha-D-glucose = UDP-alpha-D-galactose. It catalyses the reaction alpha-D-glucose = beta-D-glucose. It participates in carbohydrate metabolism; galactose metabolism. It functions in the pathway carbohydrate metabolism; hexose metabolism. In terms of biological role, mutarotase converts alpha-aldose to the beta-anomer. It is active on D-glucose, L-arabinose, D-xylose, D-galactose, maltose and lactose. This Candida maltosa (Yeast) protein is Bifunctional protein GAL10 (GAL10).